Here is a 384-residue protein sequence, read N- to C-terminus: uncharacterized protein (384 aa).

The Integrase catalytic domain maps to 137-303; it reads EHDAPNRLWQ…VPGSRYQPSA (167 aa).

This is an uncharacterized protein from Escherichia coli (strain K12).